A 739-amino-acid chain; its full sequence is Phosphoribosylformylglycinamidine synthase subunit PurL (739 aa).

The active site involves His53. Positions 56 and 95 each coordinate ATP. Glu97 provides a ligand contact to Mg(2+). Substrate contacts are provided by residues 98–101 (SHNH) and Arg120. The Proton acceptor role is filled by His99. Asp121 is a Mg(2+) binding site. Residue Gln244 participates in substrate binding. Residue Asp274 coordinates Mg(2+). 318–320 (ESQ) serves as a coordination point for substrate. ATP-binding residues include Asp501 and Gly538. Asn539 contributes to the Mg(2+) binding site. Residue Ser541 participates in substrate binding.

The protein belongs to the FGAMS family. As to quaternary structure, monomer. Part of the FGAM synthase complex composed of 1 PurL, 1 PurQ and 2 PurS subunits.

It is found in the cytoplasm. It carries out the reaction N(2)-formyl-N(1)-(5-phospho-beta-D-ribosyl)glycinamide + L-glutamine + ATP + H2O = 2-formamido-N(1)-(5-O-phospho-beta-D-ribosyl)acetamidine + L-glutamate + ADP + phosphate + H(+). Its pathway is purine metabolism; IMP biosynthesis via de novo pathway; 5-amino-1-(5-phospho-D-ribosyl)imidazole from N(2)-formyl-N(1)-(5-phospho-D-ribosyl)glycinamide: step 1/2. Part of the phosphoribosylformylglycinamidine synthase complex involved in the purines biosynthetic pathway. Catalyzes the ATP-dependent conversion of formylglycinamide ribonucleotide (FGAR) and glutamine to yield formylglycinamidine ribonucleotide (FGAM) and glutamate. The FGAM synthase complex is composed of three subunits. PurQ produces an ammonia molecule by converting glutamine to glutamate. PurL transfers the ammonia molecule to FGAR to form FGAM in an ATP-dependent manner. PurS interacts with PurQ and PurL and is thought to assist in the transfer of the ammonia molecule from PurQ to PurL. In Listeria monocytogenes serovar 1/2a (strain ATCC BAA-679 / EGD-e), this protein is Phosphoribosylformylglycinamidine synthase subunit PurL.